Reading from the N-terminus, the 1628-residue chain is Lysine-specific histone demethylase 1 homolog 3 (1628 aa).

The tract at residues methionine 1–serine 71 is disordered. The segment covering phenylalanine 19–proline 28 has biased composition (acidic residues). A compositionally biased stretch (basic and acidic residues) spans lysine 43–leucine 64. The SWIRM domain maps to glycine 378–alanine 478. Residues glutamate 647, arginine 649, arginine 655, and glutamate 1077 each coordinate FAD. Residues serine 1271–asparagine 1317 form a disordered region.

Belongs to the flavin monoamine oxidase family. FAD is required as a cofactor.

Its function is as follows. Probable histone demethylase that reduces the levels of histone H3 'Lys-4' methylation in chromatin. The protein is Lysine-specific histone demethylase 1 homolog 3 (LDL3) of Arabidopsis thaliana (Mouse-ear cress).